Consider the following 426-residue polypeptide: G2/mitotic-specific cyclin-A (426 aa).

The segment covering 1-11 (MSMVHGSSFQI) has biased composition (polar residues). Positions 1-22 (MSMVHGSSFQIAQDGENENQGV) are disordered.

This sequence belongs to the cyclin family. Cyclin AB subfamily.

Essential for the control of the cell cycle at the G2/M (mitosis) transition. Interacts with the CDC2 and CDK2 protein kinases to form MPF. G2/M cyclins accumulate steadily during G2 and are abruptly destroyed at mitosis. This Patella vulgata (Common limpet) protein is G2/mitotic-specific cyclin-A.